We begin with the raw amino-acid sequence, 303 residues long: Elongation factor Ts (303 aa).

The tract at residues 80–83 (TDFV) is involved in Mg(2+) ion dislocation from EF-Tu.

This sequence belongs to the EF-Ts family.

It localises to the cytoplasm. Functionally, associates with the EF-Tu.GDP complex and induces the exchange of GDP to GTP. It remains bound to the aminoacyl-tRNA.EF-Tu.GTP complex up to the GTP hydrolysis stage on the ribosome. This Clostridium botulinum (strain Alaska E43 / Type E3) protein is Elongation factor Ts.